Here is a 236-residue protein sequence, read N- to C-terminus: Biosynthetic peptidoglycan transglycosylase (236 aa).

A helical transmembrane segment spans residues 12–31 (ALLWFAAGSVLVVLVLRWVP).

The protein belongs to the glycosyltransferase 51 family.

It is found in the cell inner membrane. It catalyses the reaction [GlcNAc-(1-&gt;4)-Mur2Ac(oyl-L-Ala-gamma-D-Glu-L-Lys-D-Ala-D-Ala)](n)-di-trans,octa-cis-undecaprenyl diphosphate + beta-D-GlcNAc-(1-&gt;4)-Mur2Ac(oyl-L-Ala-gamma-D-Glu-L-Lys-D-Ala-D-Ala)-di-trans,octa-cis-undecaprenyl diphosphate = [GlcNAc-(1-&gt;4)-Mur2Ac(oyl-L-Ala-gamma-D-Glu-L-Lys-D-Ala-D-Ala)](n+1)-di-trans,octa-cis-undecaprenyl diphosphate + di-trans,octa-cis-undecaprenyl diphosphate + H(+). Its pathway is cell wall biogenesis; peptidoglycan biosynthesis. In terms of biological role, peptidoglycan polymerase that catalyzes glycan chain elongation from lipid-linked precursors. In Pseudomonas savastanoi pv. phaseolicola (strain 1448A / Race 6) (Pseudomonas syringae pv. phaseolicola (strain 1448A / Race 6)), this protein is Biosynthetic peptidoglycan transglycosylase.